The following is a 215-amino-acid chain: LexA repressor (215 aa).

A DNA-binding region (H-T-H motif) is located at residues 28-48; sequence RAEIAAELGFSSPNAAEEHLR. Catalysis depends on for autocatalytic cleavage activity residues Ser-133 and Lys-170.

The protein belongs to the peptidase S24 family. As to quaternary structure, homodimer.

The enzyme catalyses Hydrolysis of Ala-|-Gly bond in repressor LexA.. Functionally, represses a number of genes involved in the response to DNA damage (SOS response), including recA and lexA. In the presence of single-stranded DNA, RecA interacts with LexA causing an autocatalytic cleavage which disrupts the DNA-binding part of LexA, leading to derepression of the SOS regulon and eventually DNA repair. This is LexA repressor from Burkholderia ambifaria (strain MC40-6).